Here is an 809-residue protein sequence, read N- to C-terminus: LPS-assembly protein LptD (809 aa).

An N-terminal signal peptide occupies residues 1–22 (MRRALRLLPLPLSIAICLPAMA).

It belongs to the LptD family. As to quaternary structure, component of the lipopolysaccharide transport and assembly complex. Interacts with LptE and LptA.

It is found in the cell outer membrane. Together with LptE, is involved in the assembly of lipopolysaccharide (LPS) at the surface of the outer membrane. This Xanthomonas euvesicatoria pv. vesicatoria (strain 85-10) (Xanthomonas campestris pv. vesicatoria) protein is LPS-assembly protein LptD.